Reading from the N-terminus, the 103-residue chain is Pyrimidine/purine nucleoside phosphorylase (103 aa).

It belongs to the nucleoside phosphorylase PpnP family.

The catalysed reaction is a purine D-ribonucleoside + phosphate = a purine nucleobase + alpha-D-ribose 1-phosphate. It carries out the reaction adenosine + phosphate = alpha-D-ribose 1-phosphate + adenine. The enzyme catalyses cytidine + phosphate = cytosine + alpha-D-ribose 1-phosphate. It catalyses the reaction guanosine + phosphate = alpha-D-ribose 1-phosphate + guanine. The catalysed reaction is inosine + phosphate = alpha-D-ribose 1-phosphate + hypoxanthine. It carries out the reaction thymidine + phosphate = 2-deoxy-alpha-D-ribose 1-phosphate + thymine. The enzyme catalyses uridine + phosphate = alpha-D-ribose 1-phosphate + uracil. It catalyses the reaction xanthosine + phosphate = alpha-D-ribose 1-phosphate + xanthine. Functionally, catalyzes the phosphorolysis of diverse nucleosides, yielding D-ribose 1-phosphate and the respective free bases. Can use uridine, adenosine, guanosine, cytidine, thymidine, inosine and xanthosine as substrates. Also catalyzes the reverse reactions. In Sulfurimonas denitrificans (strain ATCC 33889 / DSM 1251) (Thiomicrospira denitrificans (strain ATCC 33889 / DSM 1251)), this protein is Pyrimidine/purine nucleoside phosphorylase.